Here is a 160-residue protein sequence, read N- to C-terminus: Peripheral myelin protein 22 (160 aa).

Methionine 1 is a topological domain (cytoplasmic). A helical membrane pass occupies residues 2-31 (LLLLLGILFLHIAVLVLLFVSTIVSQWLVG). The Extracellular portion of the chain corresponds to 32-64 (NGHRTDLWQNCTTSALGAVQHCYSSSVSEWLQS). An N-linked (GlcNAc...) asparagine glycan is attached at asparagine 41. Residues 65-91 (VQATMILSVIFSVLSLFLFFCQLFTLT) traverse the membrane as a helical segment. Residues 92 to 95 (KGGR) are Cytoplasmic-facing. The chain crosses the membrane as a helical span at residues 96-119 (FYITGVFQILAGLCVMSAAAIYTV). At 120-133 (RHSEWHVNNDYSYG) the chain is on the extracellular side. The helical transmembrane segment at 134-156 (FAYILAWVAFPLALLSGIIYVIL) threads the bilayer. Residues 157–160 (RKRE) are Cytoplasmic-facing.

Belongs to the PMP-22/EMP/MP20 family. Ubiquitinated by the DCX(DCAF13) E3 ubiquitin ligase complex, leading to its degradation. In terms of tissue distribution, found exclusively in the peripheral nervous system. Present in both myelinating and nonmyelinating Schwann cells. Found in the tumors of Schwann cell lineage where axons are present (neurofibromas) but not where axons are absent (schwannomas).

It localises to the cell membrane. Its function is as follows. Might be involved in growth regulation, and in myelinization in the peripheral nervous system. This chain is Peripheral myelin protein 22 (Pmp22), found in Rattus norvegicus (Rat).